The sequence spans 87 residues: Large ribosomal subunit protein bL27 (87 aa).

Belongs to the bacterial ribosomal protein bL27 family.

In Wigglesworthia glossinidia brevipalpis, this protein is Large ribosomal subunit protein bL27.